A 74-amino-acid polypeptide reads, in one-letter code: Acyl carrier protein (74 aa).

The region spanning 1-74 (MFEKVRKIIA…DVVEYIKNNS (74 aa)) is the Carrier domain. O-(pantetheine 4'-phosphoryl)serine is present on serine 34.

This sequence belongs to the acyl carrier protein (ACP) family. Post-translationally, 4'-phosphopantetheine is transferred from CoA to a specific serine of apo-ACP by AcpS. This modification is essential for activity because fatty acids are bound in thioester linkage to the sulfhydryl of the prosthetic group.

The protein localises to the cytoplasm. It participates in lipid metabolism; fatty acid biosynthesis. Its function is as follows. Carrier of the growing fatty acid chain in fatty acid biosynthesis. The protein is Acyl carrier protein of Acetivibrio thermocellus (strain ATCC 27405 / DSM 1237 / JCM 9322 / NBRC 103400 / NCIMB 10682 / NRRL B-4536 / VPI 7372) (Clostridium thermocellum).